We begin with the raw amino-acid sequence, 239 residues long: Pyridoxine 5'-phosphate synthase (239 aa).

Asn-7 contributes to the 3-amino-2-oxopropyl phosphate binding site. A 1-deoxy-D-xylulose 5-phosphate-binding site is contributed by 9-10 (DH). Arg-18 is a 3-amino-2-oxopropyl phosphate binding site. The Proton acceptor role is filled by His-43. 1-deoxy-D-xylulose 5-phosphate is bound by residues Arg-45 and His-50. Glu-70 (proton acceptor) is an active-site residue. Thr-100 contributes to the 1-deoxy-D-xylulose 5-phosphate binding site. Residue His-191 is the Proton donor of the active site. 3-amino-2-oxopropyl phosphate is bound by residues Gly-192 and 213–214 (GH).

This sequence belongs to the PNP synthase family. In terms of assembly, homooctamer; tetramer of dimers.

The protein resides in the cytoplasm. The enzyme catalyses 3-amino-2-oxopropyl phosphate + 1-deoxy-D-xylulose 5-phosphate = pyridoxine 5'-phosphate + phosphate + 2 H2O + H(+). Its pathway is cofactor biosynthesis; pyridoxine 5'-phosphate biosynthesis; pyridoxine 5'-phosphate from D-erythrose 4-phosphate: step 5/5. Its function is as follows. Catalyzes the complicated ring closure reaction between the two acyclic compounds 1-deoxy-D-xylulose-5-phosphate (DXP) and 3-amino-2-oxopropyl phosphate (1-amino-acetone-3-phosphate or AAP) to form pyridoxine 5'-phosphate (PNP) and inorganic phosphate. The polypeptide is Pyridoxine 5'-phosphate synthase (Synechococcus sp. (strain JA-2-3B'a(2-13)) (Cyanobacteria bacterium Yellowstone B-Prime)).